The sequence spans 394 residues: HORMA domain-containing protein 1 (394 aa).

Positions 24–226 constitute an HORMA domain; it reads QQSLVLVKRL…TPFHTFKVKV (203 aa). Residues 306-394 are disordered; that stretch reads KESPELSISH…RKFSEPKEHI (89 aa). Over residues 311-325 the composition is skewed to polar residues; the sequence is LSISHSQVEQLVSKT. The segment covering 353–362 has biased composition (basic and acidic residues); it reads KSKESRKRSQ. Phosphoserine is present on Ser376. A Nuclear localization signal motif is present at residues 383 to 386; it reads KRRK.

In terms of assembly, interacts with HORMAD2. Interacts with IHO1. Phosphorylated at Ser-377 in a SPO11-dependent manner.

It is found in the nucleus. It localises to the chromosome. Plays a key role in meiotic progression. Regulates 3 different functions during meiosis: ensures that sufficient numbers of processed DNA double-strand breaks (DSBs) are available for successful homology search by increasing the steady-state numbers of single-stranded DSB ends. Promotes synaptonemal-complex formation independently of its role in homology search. Plays a key role in the male mid-pachytene checkpoint and the female meiotic prophase checkpoint: required for efficient build-up of ATR activity on unsynapsed chromosome regions, a process believed to form the basis of meiotic silencing of unsynapsed chromatin (MSUC) and meiotic prophase quality control in both sexes. This Sus scrofa (Pig) protein is HORMA domain-containing protein 1 (HORMAD1).